We begin with the raw amino-acid sequence, 287 residues long: 2-dehydro-3-deoxyphosphooctonate aldolase (287 aa).

The protein belongs to the KdsA family.

The protein resides in the cytoplasm. It carries out the reaction D-arabinose 5-phosphate + phosphoenolpyruvate + H2O = 3-deoxy-alpha-D-manno-2-octulosonate-8-phosphate + phosphate. The protein operates within carbohydrate biosynthesis; 3-deoxy-D-manno-octulosonate biosynthesis; 3-deoxy-D-manno-octulosonate from D-ribulose 5-phosphate: step 2/3. It functions in the pathway bacterial outer membrane biogenesis; lipopolysaccharide biosynthesis. This is 2-dehydro-3-deoxyphosphooctonate aldolase from Nitrobacter hamburgensis (strain DSM 10229 / NCIMB 13809 / X14).